The chain runs to 503 residues: MQYRDLRDFLAQLERIGELRRIRVPVSPRLEMTEVCDRLLRAEGPAVVFERPADGAQTYDMPVLANLFGTPRRVALGMGAESLDELRDVGRLLSALKEPEPPRGLREAGKLWTMAKAVWDMAPRKVSSPACQEIVLEGDDVDLSRIPVQTCWPGDAAPLVTWGLVVTRGPHKKRQNLGIYRQQVINRNQVIMRWLAHRGGALDFREHAIAHPGQPFPIAVALGADPATILGAVTPVPDTLSEYQFAGLLRGSRTELAQCLTPSLAQAQLQVPAGAEIVLEGHIQPDPAHPSGYQHALEGPFGDHTGYYNEQDWFPVFTVERITMRRDPIYHSTYTGKPPDEPAVLGVALNEVFVPLLQKQFPEIADFYLPPEGCSYRMALVSMKKQYAGHAKRVMFGVWSFLRQFMYTKFIVVVDDDVDLRDWKEVIWAITTRVDPARDTVMVENTPIDYLDFASPVSGLGSKMGIDATNKWPGETTREWGQPIVMDAAVKSRVDAMWETLFQ.

Position 176 (Asn-176) interacts with Mn(2+). Prenylated FMN-binding positions include 179–181 (IYR), 193–195 (RWL), and 198–199 (RG). Glu-242 contacts Mn(2+). Asp-303 (proton donor) is an active-site residue.

Belongs to the UbiD family. As to quaternary structure, homohexamer. Prenylated FMN serves as cofactor. Requires Mn(2+) as cofactor.

It localises to the cell membrane. The enzyme catalyses a 4-hydroxy-3-(all-trans-polyprenyl)benzoate + H(+) = a 2-(all-trans-polyprenyl)phenol + CO2. Its pathway is cofactor biosynthesis; ubiquinone biosynthesis. Its function is as follows. Catalyzes the decarboxylation of 3-octaprenyl-4-hydroxy benzoate to 2-octaprenylphenol, an intermediate step in ubiquinone biosynthesis. The sequence is that of 3-octaprenyl-4-hydroxybenzoate carboxy-lyase from Ralstonia nicotianae (strain ATCC BAA-1114 / GMI1000) (Ralstonia solanacearum).